A 137-amino-acid polypeptide reads, in one-letter code: MLQPKRTKFRKMHKGRIKGLAKGGSDLNFGTYGLKAVTPERVTARQIEAARRAMTRHMKRQGRVWIRIFPDTPVTSKPVEVRMGKGKGSVDFWACKVKPGRVMFEIDGVNEDIAREALRLAAMKLPVQTRIVVREDW.

Belongs to the universal ribosomal protein uL16 family. As to quaternary structure, part of the 50S ribosomal subunit.

Its function is as follows. Binds 23S rRNA and is also seen to make contacts with the A and possibly P site tRNAs. The chain is Large ribosomal subunit protein uL16 from Ruegeria sp. (strain TM1040) (Silicibacter sp.).